The following is a 248-amino-acid chain: Thiol:disulfide interchange protein DsbG (248 aa).

The signal sequence occupies residues 1-17; that stretch reads MLKKILLLALLPAIAFA. Cysteines 126 and 129 form a disulfide.

The protein belongs to the thioredoxin family. DsbC subfamily. In terms of assembly, homodimer. Interacts with ErfK, YbiS and YnhG.

Its subcellular location is the periplasm. Its function is as follows. Involved in disulfide bond formation. DsbG and DsbC are part of a periplasmic reducing system that controls the level of cysteine sulfenylation, and provides reducing equivalents to rescue oxidatively damaged secreted proteins such as ErfK, YbiS and YnhG. Probably also functions as a disulfide isomerase with a narrower substrate specificity than DsbC. DsbG is maintained in a reduced state by DsbD. Displays chaperone activity in both redox states in vitro. The sequence is that of Thiol:disulfide interchange protein DsbG (dsbG) from Escherichia coli (strain K12).